The primary structure comprises 648 residues: Biosynthetic arginine decarboxylase (648 aa).

At Lys109 the chain carries N6-(pyridoxal phosphate)lysine. A substrate-binding site is contributed by 291 to 301 (IDVGGGLGIDF).

This sequence belongs to the Orn/Lys/Arg decarboxylase class-II family. SpeA subfamily. It depends on Mg(2+) as a cofactor. The cofactor is pyridoxal 5'-phosphate.

The catalysed reaction is L-arginine + H(+) = agmatine + CO2. It functions in the pathway amine and polyamine biosynthesis; agmatine biosynthesis; agmatine from L-arginine: step 1/1. Functionally, catalyzes the biosynthesis of agmatine from arginine. In Prochlorococcus marinus (strain MIT 9515), this protein is Biosynthetic arginine decarboxylase.